Consider the following 729-residue polypeptide: Solute carrier family 15 member 2 (729 aa).

The interval 1–35 (MNPFQKNESKETLFSPVSTEEMLPRPPSPPKKSPP) is disordered. The Cytoplasmic segment spans residues 1 to 57 (MNPFQKNESKETLFSPVSTEEMLPRPPSPPKKSPPKIFGSSYPVSIAFIVVNEFCER). Ser-9 carries the phosphoserine modification. Thr-12 carries the post-translational modification Phosphothreonine. Residue Ser-28 is modified to Phosphoserine. The chain crosses the membrane as a helical span at residues 58–78 (FSYYGMKAVLTLYFLYFLHWN). Over 79–87 (EDTSTSVYH) the chain is Extracellular. A helical membrane pass occupies residues 88–108 (AFSSLCYFTPILGAAIADSWL). Over 109–113 (GKFKT) the chain is Cytoplasmic. Residues 114–134 (IIYLSLVYVLGHVFKSLGAIP) form a helical membrane-spanning segment. At 135 to 139 (ILGGK) the chain is on the extracellular side. A helical transmembrane segment spans residues 140–160 (MLHTILSLVGLSLIALGTGGI). Topologically, residues 161–183 (KPCVAAFGGDQFEEEHAEARTRY) are cytoplasmic. The chain crosses the membrane as a helical span at residues 184-204 (FSVFYLAINAGSLISTFITPM). The Extracellular portion of the chain corresponds to 205–217 (LRGDVKCFGQDCY). A helical transmembrane segment spans residues 218–238 (ALAFGVPGLLMVLALVVFAMG). The Cytoplasmic portion of the chain corresponds to 239–295 (SKMYRKPPPEGNIVAQVIKCIWFALCNRFRNRSGDLPKRQHWLDWAAEKYPKHLIAD). Residues 296–316 (VKALTRVLFLYIPLPMFWALL) traverse the membrane as a helical segment. Residues 317–343 (DQQGSRWTLQANKMNGDLGFFVLQPDQ) lie on the Extracellular side of the membrane. Residues 344–364 (MQVLNPFLVLIFIPLFDLVIY) form a helical membrane-spanning segment. The Cytoplasmic segment spans residues 365-380 (RLISKCRINFSSLRKM). Residues 381–401 (AVGMILACLAFAVAALVETKI) form a helical membrane-spanning segment. The Extracellular segment spans residues 402–611 (NGMIHPQPAS…PVNKLSIAWQ (210 aa)). Positions 402–611 (NGMIHPQPAS…PVNKLSIAWQ (210 aa)) are extracellular domain (ECD). Asn-435, Asn-448, Asn-528, and Asn-587 each carry an N-linked (GlcNAc...) asparagine glycan. Residues 612–632 (LPQYVLVTAAEVMFSVTGLEF) traverse the membrane as a helical segment. Topologically, residues 633–643 (SYSQAPSSMKS) are cytoplasmic. Residues 644 to 664 (VLQAAWLLTVAVGNIIVLVVA) form a helical membrane-spanning segment. Residues 665–674 (QFSGLAQWAE) are Extracellular-facing. Residues 675 to 695 (FVLFSCLLLVVCLIFSVMAYY) form a helical membrane-spanning segment. The Cytoplasmic portion of the chain corresponds to 696–729 (YVPLKSEDTREATDKQIPAVQGNMINLETKNTRL).

The protein belongs to the major facilitator superfamily. Proton-dependent oligopeptide transporter (POT/PTR) (TC 2.A.17) family. As to quaternary structure, interacts (via extracellular domain region) with trypsin. Strongly expressed in kidney cortex and medulla. Also detected in brain, lung and spleen. Expressed in choroid plexus.

Its subcellular location is the apical cell membrane. The protein resides in the cytoplasmic vesicle. It is found in the phagosome membrane. The protein localises to the cell membrane. The enzyme catalyses a dipeptide(out) + 2 H(+)(out) = a dipeptide(in) + 2 H(+)(in). It catalyses the reaction glycyl-L-leucine(out) + 2 H(+)(out) = glycyl-L-leucine(in) + 2 H(+)(in). It carries out the reaction glycyl-L-lysine(out) + 2 H(+)(out) = glycyl-L-lysine(in) + 2 H(+)(in). The catalysed reaction is glycyl-L-glutamate(out) + 3 H(+)(out) = glycyl-L-glutamate(in) + 3 H(+)(in). The enzyme catalyses L-alanyl-L-alanine(out) + 2 H(+)(out) = L-alanyl-L-alanine(in) + 2 H(+)(in). It catalyses the reaction an L-amino acid tripeptide(out) + 2 H(+)(out) = an L-amino acid tripeptide(in) + 2 H(+)(in). It carries out the reaction N-acetyl-D-muramoyl-L-alanyl-D-isoglutamine(out) + 3 H(+)(out) = N-acetyl-D-muramoyl-L-alanyl-D-isoglutamine(in) + 3 H(+)(in). The catalysed reaction is carnosine(out) + 2 H(+)(out) = carnosine(in) + 2 H(+)(in). In terms of biological role, proton-coupled amino-acid transporter that transports oligopeptides of 2 to 4 amino acids with a preference for dipeptides. Transports neutral and anionic dipeptides with a proton to peptide stoichiometry of 2:1 or 3:1. In kidney, involved in the absorption of circulating di- and tripeptides from the glomerular filtrate. Can also transport beta-lactam antibiotics, such as the aminocephalosporin cefadroxil, and other antiviral and anticancer drugs. Transports the dipeptide-like aminopeptidase inhibitor bestatin. Also able to transport carnosine. Involved in innate immunity by promoting the detection of microbial pathogens by NOD-like receptors (NLRs). Mediates transport of bacterial peptidoglycans across the plasma membrane or, in macrophages, the phagosome membrane: catalyzes the transport of certain bacterial peptidoglycans, such as muramyl dipeptide (MDP), the NOD2 ligand. This is Solute carrier family 15 member 2 from Rattus norvegicus (Rat).